The primary structure comprises 375 residues: Alcohol dehydrogenase B (375 aa).

Cys40, His62, Cys92, Cys95, Cys98, Cys106, and Cys169 together coordinate Zn(2+).

This sequence belongs to the zinc-containing alcohol dehydrogenase family. Zn(2+) is required as a cofactor.

It is found in the cytoplasm. The catalysed reaction is a primary alcohol + NAD(+) = an aldehyde + NADH + H(+). It catalyses the reaction a secondary alcohol + NAD(+) = a ketone + NADH + H(+). This chain is Alcohol dehydrogenase B (adhB), found in Mycobacterium bovis (strain ATCC BAA-935 / AF2122/97).